The primary structure comprises 546 residues: Chaperonin GroEL (546 aa).

ATP is bound by residues 30 to 33 (TLGP), Lys-51, 87 to 91 (DGTTT), Gly-415, 479 to 481 (NAA), and Asp-495.

Belongs to the chaperonin (HSP60) family. As to quaternary structure, forms a cylinder of 14 subunits composed of two heptameric rings stacked back-to-back. Interacts with the co-chaperonin GroES.

It is found in the cytoplasm. It carries out the reaction ATP + H2O + a folded polypeptide = ADP + phosphate + an unfolded polypeptide.. In terms of biological role, together with its co-chaperonin GroES, plays an essential role in assisting protein folding. The GroEL-GroES system forms a nano-cage that allows encapsulation of the non-native substrate proteins and provides a physical environment optimized to promote and accelerate protein folding. This chain is Chaperonin GroEL, found in Pseudomonas putida (strain ATCC 47054 / DSM 6125 / CFBP 8728 / NCIMB 11950 / KT2440).